Consider the following 270-residue polypeptide: Probable thioesterase BOA10 (270 aa).

This sequence belongs to the AMT4 thioesterase family.

It functions in the pathway polyketide biosynthesis. In terms of biological role, probable thioesterase; part of the gene cluster B that mediates the biosynthesis of botcinic acid and its botcinin derivatives, acetate-derived polyketides that contribute to virulence when combined with the sesquiterpene botrydial. Botcinic acid and its derivatives have been shown to induce chlorosis and necrosis during host plant infection, but also have antifungal activities. Two polyketide synthases, BOA6 and BOA9, are involved in the biosynthesis of botcinins. BOA6 mediates the formation of the per-methylated tetraketide core by condensation of four units of malonyl-CoA with one unit of acetyl-CoA, which would be methylated in activated methylene groups to yield a bicyclic acid intermediate that could then either be converted to botrylactone derivatives or lose the starter acetate unit through a retro-Claisen type C-C bond cleavage to yield botcinin derivatives. The second polyketide synthase, BOA9, is probably required for the biosynthesis of the tetraketide side chain of botcinins. The methyltransferase (MT) domain within BOA6 is probably responsible for the incorporation of four methyl groups. The trans-enoyl reductase BOA5 might take over the enoyl reductase function of BOA6 that misses an ER domain. The monooxygenases BOA2, BOA3 and BOA4 might be involved in further hydroxylations at C4, C5 and C8, whereas BOA7, close to BOA9, could potentially be involved in the hydroxylation at C4 in the side chain of botcinins. The sequence is that of Probable thioesterase BOA10 from Botryotinia fuckeliana (strain B05.10) (Noble rot fungus).